A 291-amino-acid chain; its full sequence is uncharacterized protein (291 aa).

The region spanning 68-205 (PVAVSASFLW…VIQLWARPRG (138 aa)) is the DAGKc domain.

This is an uncharacterized protein from Mycobacterium tuberculosis (strain CDC 1551 / Oshkosh).